Here is a 114-residue protein sequence, read N- to C-terminus: UPF0145 protein Acry_1752 (114 aa).

Belongs to the UPF0145 family.

The protein is UPF0145 protein Acry_1752 of Acidiphilium cryptum (strain JF-5).